A 211-amino-acid chain; its full sequence is Uracil phosphoribosyltransferase (211 aa).

5-phospho-alpha-D-ribose 1-diphosphate is bound by residues Arg-78, Arg-103, and 130–138; that span reads DPMLATGGT. Uracil-binding positions include Ile-195 and 200–202; that span reads GDA. A 5-phospho-alpha-D-ribose 1-diphosphate-binding site is contributed by Asp-201.

It belongs to the UPRTase family. Mg(2+) serves as cofactor.

The enzyme catalyses UMP + diphosphate = 5-phospho-alpha-D-ribose 1-diphosphate + uracil. It functions in the pathway pyrimidine metabolism; UMP biosynthesis via salvage pathway; UMP from uracil: step 1/1. Allosterically activated by GTP. Functionally, catalyzes the conversion of uracil and 5-phospho-alpha-D-ribose 1-diphosphate (PRPP) to UMP and diphosphate. The chain is Uracil phosphoribosyltransferase from Streptomyces coelicolor (strain ATCC BAA-471 / A3(2) / M145).